A 104-amino-acid polypeptide reads, in one-letter code: Nucleoid-associated protein LSL_1227 (104 aa).

Low complexity predominate over residues 1-19 (MMMRGMNMQSMMKQMQKLQ). The disordered stretch occupies residues 1-24 (MMMRGMNMQSMMKQMQKLQKNMKK).

The protein belongs to the YbaB/EbfC family. In terms of assembly, homodimer.

Its subcellular location is the cytoplasm. The protein localises to the nucleoid. Its function is as follows. Binds to DNA and alters its conformation. May be involved in regulation of gene expression, nucleoid organization and DNA protection. The polypeptide is Nucleoid-associated protein LSL_1227 (Ligilactobacillus salivarius (strain UCC118) (Lactobacillus salivarius)).